The primary structure comprises 493 residues: Trichothecene 8-O-acetyltransferase (493 aa).

Over residues 180-191 (QDQNENEVQQPK) the composition is skewed to polar residues. The interval 180–199 (QDQNENEVQQPKNLPDPDEP) is disordered.

It participates in sesquiterpene biosynthesis; trichothecene biosynthesis. In terms of biological role, trichothecene 8-O-acetyltransferase; part of 2-gene cluster involved in trichothecene C-8 modification that mediates the biosynthesis of T2-toxin. The biosynthesis of trichothecenes begins with the cyclization of farnesyl diphosphate to trichodiene and is catalyzed by the trichodiene synthase TRI5. Trichodiene undergoes a series of oxygenations catalyzed by the cytochrome P450 monooxygenase TRI4. TRI4 controls the addition of four oxygens at C-2, C-3, C-11, and the C-12, C-13-epoxide to form the intermediate isotrichotriol. Isotrichotriol then undergoes a non-enzymatic isomerization and cyclization to form isotrichodermol. During this process, the oxygen at the C-2 position becomes the pyran ring oxygen and the hydroxyl group at C-11 is lost. More complex type A trichothecenes are built by modifying isotrichodermol through a series of paired hydroxylation and acetylation or acylation steps. Isotrichodermol is converted to isotrichodermin by the acetyltransferase TRI101. TRI101 encodes a C-3 transacetylase that acts as a self-protection or resistance factor during biosynthesis and that the presence of a free C-3 hydroxyl group is a key component of Fusarium trichothecene phytotoxicity. A second hydroxyl group is added to C-15 by the trichothecene C-15 hydroxylase TRI11, producing 15-decalonectrin, which is then acetylated by TRI3, producing calonectrin. A third hydroxyl group is added at C-4 by the cytochrome P450 monooxygenase TRI13, converting calonectrin to 3,15-diacetoxyspirpenol, which is subsequently acetylated bythe acetyltransferase TRI7. A fourth hydroxyl group is added to C-8 by the cytochrome P450 monooxygenase TRI1, followed by the addition of an isovaleryl moiety by TRI16. Finally, the acetyl group is removed from the C-3 position by the trichothecene C-3 esterase TRI8 to produce T-2 toxin. This Fusarium sporotrichioides protein is Trichothecene 8-O-acetyltransferase.